The sequence spans 203 residues: Outer-membrane lipoprotein carrier protein (203 aa).

The N-terminal stretch at 1–19 (MKKSIVVLFSAVLPFAVFA) is a signal peptide.

The protein belongs to the LolA family. In terms of assembly, monomer.

The protein resides in the periplasm. Participates in the translocation of lipoproteins from the inner membrane to the outer membrane. Only forms a complex with a lipoprotein if the residue after the N-terminal Cys is not an aspartate (The Asp acts as a targeting signal to indicate that the lipoprotein should stay in the inner membrane). This Shewanella amazonensis (strain ATCC BAA-1098 / SB2B) protein is Outer-membrane lipoprotein carrier protein.